A 36-amino-acid chain; its full sequence is MMDFNLPSIFVPLVGLVFPAIAMASLFLYVQKNKIV.

The chain crosses the membrane as a helical span at residues 10–29 (FVPLVGLVFPAIAMASLFLY).

The protein belongs to the PsaI family.

It is found in the plastid. Its subcellular location is the chloroplast thylakoid membrane. In terms of biological role, may help in the organization of the PsaL subunit. This chain is Photosystem I reaction center subunit VIII, found in Oryza nivara (Indian wild rice).